Consider the following 327-residue polypeptide: Expansin-B7 (327 aa).

An N-terminal signal peptide occupies residues 1–30 (MAGRSRRRSFWSVGVAAALLCLLAAHGCSA). Positions 30–88 (AKHHKPKPTPGGISGNASSSSSNSSTPSIPPPVAPTPTAPTPPIPSPGTGSSNGSSGGG) are disordered. Positions 44-56 (GNASSSSSNSSTP) are enriched in low complexity. Residues Asn45 and Asn52 are each glycosylated (N-linked (GlcNAc...) asparagine). Pro residues predominate over residues 57–75 (SIPPPVAPTPTAPTPPIPS). A glycan (N-linked (GlcNAc...) asparagine) is linked at Asn82. Positions 112 to 218 (GGACGFKNVN…RRVPCQYPGL (107 aa)) constitute an Expansin-like EG45 domain. Intrachain disulfides connect Cys115-Cys143, Cys146-Cys213, and Cys151-Cys157. An Expansin-like CBD domain is found at 231–322 (VYMAILVEYE…DWQPNTVYSS (92 aa)). Asn298 carries N-linked (GlcNAc...) asparagine glycosylation.

Belongs to the expansin family. Expansin B subfamily.

It localises to the secreted. The protein localises to the cell wall. It is found in the membrane. Functionally, may cause loosening and extension of plant cell walls by disrupting non-covalent bonding between cellulose microfibrils and matrix glucans. No enzymatic activity has been found. May be required for rapid internodal elongation in deepwater rice during submergence. The polypeptide is Expansin-B7 (EXPB7) (Oryza sativa subsp. japonica (Rice)).